Here is a 757-residue protein sequence, read N- to C-terminus: MDVNPTLLFLKVPAQNAISTTFPYTGDPPYSHGTGTGYTMDTVNRTHQYSEKGKWTTNTETGAPQLNPIDGPLPEDNEPSGYAQTDCVLEAMAFLEESHPGIFENSCLETMEVVQQTRVDKLTQGRQTYDWTLKRNQPAATALANTIEVFRSNGLTANESGRLIDFLKDVMESMDKGEMEIITHFQRKRRVRDNMTKKMVTQRTIGKKKQRLNKRSYLIRALTLNTMTKDAERGKLKRRAIATPGMQIRGFVYFVETLARSICEKLEQSGLPVGGNEKKAKLANVVRKMMTNSQDTELSFTITGDNTKWNENQNPRMFLAMITYITRNQPEWFRNVLSIAPIMFSNKMARLGKGYMFESKSMKLRTQIPAEMLASIDLKYFNESTRKKIEKIRPLLIDGTASLSPGMMMGMFNMLSTVLGVSILNLGQKRYTKTTYWWDGLQSSDDFALIVNAPNHEGIEAGVDRFYRTCKLVGINMTKKKSYINRTGTCEFTSFFYRYGFVANFSMELPSFGVSGINESADMSIGVTVIKNNMMDNDLGPATAQMALQLFIKDYRYPYRCHRGDTQIQTRRSFELKKLWEQTRSKAGLLVSDGGPNPYNIRNLHIPEAGLKWELMDEDYQGRLCNPLNPFVSHKEIESVNNAVVMPAHGPAKSMEYDAVATTHSWIPKRNRSILNTSQRGILEDEQMYQKCCNLFEKFFPSSSYRRPVGISSMVEAMVSRARIDARIDFESGRIKKEEFAEIMKICSTIEELGRQK.

A disordered region spans residues 50–82; that stretch reads SEKGKWTTNTETGAPQLNPIDGPLPEDNEPSGY. The segment covering 55–64 has biased composition (polar residues); sequence WTTNTETGAP. Short sequence motifs (nuclear localization signal) lie at residues 187 to 195 and 203 to 216; these read RKRRVRDNM and RTIG…NKRS. The promoter-binding site stretch occupies residues 249–256; that stretch reads RGFVYFVE. The RdRp catalytic domain occupies 286 to 483; the sequence is VRKMMTNSQD…GINMTKKKSY (198 aa).

Belongs to the influenza viruses polymerase PB1 family. As to quaternary structure, influenza RNA polymerase is composed of three subunits: PB1, PB2 and PA. Interacts (via N-terminus) with PA (via C-terminus). Interacts (via C-terminus) with PB2 (via N-terminus); this interaction is essential for transcription initiation. Phosphorylated by host PRKCA.

It localises to the host nucleus. It is found in the host cytoplasm. It catalyses the reaction RNA(n) + a ribonucleoside 5'-triphosphate = RNA(n+1) + diphosphate. Functionally, RNA-dependent RNA polymerase which is responsible for replication and transcription of virus RNA segments. The transcription of viral mRNAs occurs by a unique mechanism called cap-snatching. 5' methylated caps of cellular mRNAs are cleaved after 10-13 nucleotides by PA. In turn, these short capped RNAs are used as primers by PB1 for transcription of viral mRNAs. During virus replication, PB1 initiates RNA synthesis and copy vRNA into complementary RNA (cRNA) which in turn serves as a template for the production of more vRNAs. This Aves (Cat) protein is RNA-directed RNA polymerase catalytic subunit.